Reading from the N-terminus, the 490-residue chain is Cytochrome P450 2C19 (490 aa).

Residue C435 coordinates heme.

The protein belongs to the cytochrome P450 family. Heme is required as a cofactor.

Its subcellular location is the endoplasmic reticulum membrane. The protein resides in the microsome membrane. It catalyses the reaction an organic molecule + reduced [NADPH--hemoprotein reductase] + O2 = an alcohol + oxidized [NADPH--hemoprotein reductase] + H2O + H(+). The enzyme catalyses (5Z,8Z,11Z)-eicosatrienoate + reduced [NADPH--hemoprotein reductase] + O2 = 19-hydroxy-(5Z,8Z,11Z)-eicosatrienoate + oxidized [NADPH--hemoprotein reductase] + H2O + H(+). It carries out the reaction (5Z,8Z,11Z,14Z)-eicosatetraenoate + reduced [NADPH--hemoprotein reductase] + O2 = 19-hydroxy-(5Z,8Z,11Z,14Z)-eicosatetraenoate + oxidized [NADPH--hemoprotein reductase] + H2O + H(+). The catalysed reaction is (5Z,8Z,11Z,14Z,17Z)-eicosapentaenoate + reduced [NADPH--hemoprotein reductase] + O2 = 19-hydroxy-(5Z,8Z,11Z,14Z,17Z)-eicosapentaenoate + oxidized [NADPH--hemoprotein reductase] + H2O + H(+). It catalyses the reaction (4Z,7Z,10Z,13Z,16Z,19Z)-docosahexaenoate + reduced [NADPH--hemoprotein reductase] + O2 = 21-hydroxy-(4Z,7Z,10Z,13Z,16Z,19Z)-docosahexaenoate + oxidized [NADPH--hemoprotein reductase] + H2O + H(+). The enzyme catalyses (5Z,8Z,11Z,14Z)-eicosatetraenoate + reduced [NADPH--hemoprotein reductase] + O2 = (8R,9S)-epoxy-(5Z,11Z,14Z)-eicosatrienoate + oxidized [NADPH--hemoprotein reductase] + H2O + H(+). It carries out the reaction (5Z,8Z,11Z,14Z)-eicosatetraenoate + reduced [NADPH--hemoprotein reductase] + O2 = (11R,12S)-epoxy-(5Z,8Z,14Z)-eicosatrienoate + oxidized [NADPH--hemoprotein reductase] + H2O + H(+). The catalysed reaction is (5Z,8Z,11Z,14Z)-eicosatetraenoate + reduced [NADPH--hemoprotein reductase] + O2 = (11S,12R)-epoxy-(5Z,8Z,14Z)-eicosatrienoate + oxidized [NADPH--hemoprotein reductase] + H2O + H(+). It catalyses the reaction (5Z,8Z,11Z,14Z)-eicosatetraenoate + reduced [NADPH--hemoprotein reductase] + O2 = (14R,15S)-epoxy-(5Z,8Z,11Z)-eicosatrienoate + oxidized [NADPH--hemoprotein reductase] + H2O + H(+). The enzyme catalyses (5Z,8Z,11Z,14Z,17Z)-eicosapentaenoate + reduced [NADPH--hemoprotein reductase] + O2 = (17R,18S)-epoxy-(5Z,8Z,11Z,14Z)-eicosatetraenoate + oxidized [NADPH--hemoprotein reductase] + H2O + H(+). It carries out the reaction (4Z,7Z,10Z,13Z,16Z,19Z)-docosahexaenoate + reduced [NADPH--hemoprotein reductase] + O2 = (19R,20S)-epoxy-(4Z,7Z,10Z,13Z,16Z)-docosapentaenoate + oxidized [NADPH--hemoprotein reductase] + H2O + H(+). The catalysed reaction is (4Z,7Z,10Z,13Z,16Z,19Z)-docosahexaenoate + reduced [NADPH--hemoprotein reductase] + O2 = (19S,20R)-epoxy-(4Z,7Z,10Z,13Z,16Z)-docosapentaenoate + oxidized [NADPH--hemoprotein reductase] + H2O + H(+). It catalyses the reaction (4R)-limonene + reduced [NADPH--hemoprotein reductase] + O2 = (1R,5S)-carveol + oxidized [NADPH--hemoprotein reductase] + H2O + H(+). The enzyme catalyses (4S)-limonene + reduced [NADPH--hemoprotein reductase] + O2 = (1S,5R)-carveol + oxidized [NADPH--hemoprotein reductase] + H2O + H(+). It carries out the reaction (4S)-limonene + reduced [NADPH--hemoprotein reductase] + O2 = (4S)-perillyl alcohol + oxidized [NADPH--hemoprotein reductase] + H2O + H(+). The catalysed reaction is fenbendazole + reduced [NADPH--hemoprotein reductase] + O2 = 4'-hydroxyfenbendazole + oxidized [NADPH--hemoprotein reductase] + H2O + H(+). The protein operates within lipid metabolism; fatty acid metabolism. It participates in terpene metabolism; (4R)-limonene degradation. In terms of biological role, a cytochrome P450 monooxygenase involved in the metabolism of polyunsaturated fatty acids (PUFA). Mechanistically, uses molecular oxygen inserting one oxygen atom into a substrate, and reducing the second into a water molecule, with two electrons provided by NADPH via cytochrome P450 reductase (NADPH--hemoprotein reductase). Catalyzes the hydroxylation of carbon-hydrogen bonds. Hydroxylates PUFA specifically at the omega-1 position. Catalyzes the epoxidation of double bonds of PUFA. Also metabolizes plant monoterpenes such as limonene. Oxygenates (R)- and (S)-limonene to produce carveol and perillyl alcohol. Responsible for the metabolism of a number of therapeutic agents such as the anticonvulsant drug S-mephenytoin, omeprazole, proguanil, certain barbiturates, diazepam, propranolol, citalopram and imipramine. Hydroxylates fenbendazole at the 4' position. The chain is Cytochrome P450 2C19 (CYP2C19) from Homo sapiens (Human).